The following is a 496-amino-acid chain: Glycylpeptide N-tetradecanoyltransferase 1 (496 aa).

The disordered stretch occupies residues 1–82 (MADESETAVK…SAQDQPVKMN (82 aa)). Phosphoserine is present on residues Ser-31 and Ser-47. A compositionally biased stretch (basic residues) spans 55-66 (KKKKKKQKKKKE). Phosphoserine is present on Ser-83. Residues Gln-118, Phe-119, Trp-120, Phe-247, Leu-248, Cys-249, Val-250, Ser-256, Arg-258, Val-259, and Ala-260 each coordinate tetradecanoyl-CoA.

Belongs to the NMT family. As to expression, heart, gut, kidney, liver and placenta.

It is found in the cytoplasm. The protein resides in the cytosol. Its subcellular location is the membrane. The enzyme catalyses N-terminal glycyl-[protein] + tetradecanoyl-CoA = N-tetradecanoylglycyl-[protein] + CoA + H(+). It catalyses the reaction N-terminal glycyl-L-lysyl-[protein] + tetradecanoyl-CoA = N-terminal glycyl-(N(6)-tetradecanoyl)-L-lysyl-[protein] + CoA + H(+). Adds a myristoyl group to the N-terminal glycine residue of certain cellular and viral proteins. Also able to mediate N-terminal lysine myristoylation of proteins: catalyzes myristoylation of ARF6 on both 'Gly-2' and 'Lys-3'. Lysine myristoylation is required to maintain ARF6 on membranes during the GTPase cycle. This chain is Glycylpeptide N-tetradecanoyltransferase 1, found in Homo sapiens (Human).